Here is a 419-residue protein sequence, read N- to C-terminus: L-rhamnose isomerase (419 aa).

The Mn(2+) site is built by His-262, Asp-294, and Asp-296.

The protein belongs to the rhamnose isomerase family. Homotetramer. It depends on Mn(2+) as a cofactor.

Its subcellular location is the cytoplasm. It carries out the reaction L-rhamnopyranose = L-rhamnulose. It functions in the pathway carbohydrate degradation; L-rhamnose degradation; glycerone phosphate from L-rhamnose: step 1/3. Functionally, catalyzes the interconversion of L-rhamnose and L-rhamnulose. This chain is L-rhamnose isomerase, found in Salmonella typhi.